Reading from the N-terminus, the 299-residue chain is KATNB1-like protein 1 (299 aa).

Positions 8–15 match the Nuclear localization signal motif; the sequence is VKKRNFSN. At Ser56 the chain carries Phosphoserine.

Interacts with KATNA1 and KATNAL1; these interactions are competed by KATNB1 which has a higher affinity for them.

The protein localises to the nucleus. Its subcellular location is the cytoplasm. It localises to the cytoskeleton. It is found in the spindle pole. Functionally, regulates microtubule-severing activity of KATNAL1 in a concentration-dependent manner in vitro. This chain is KATNB1-like protein 1 (Katnbl1), found in Mus musculus (Mouse).